The primary structure comprises 215 residues: MSGGDGIPTFKLVLVGDGGTGKTTFVKRHLTGEFEKKYVATLGVEVHPLVFHTNRGQIRFNVWDTAGQEKFGGLRDGYYIQGQCAIIMFDVTARVTYKNVPNWHRDLARVCENIPIVLCGNKVDVKDRKVKAKTITFHRKKNLQYYDISAKSNYNFEKPFLWLARKLLGDPNLEFVAMPALAPPEVQMDPAMIAEYEKDLDNAAKADLPDDDDDL.

The 165-residue stretch at 6–170 folds into the Small GTPase Ran-type domain; the sequence is GIPTFKLVLV…LWLARKLLGD (165 aa). Position 17-24 (17-24) interacts with GTP; it reads DGGTGKTT. Residues 36–44 form a switch-I region; that stretch reads KKYVATLGV. Residues glycine 67, 121 to 124, and 149 to 151 contribute to the GTP site; these read NKVD and SAK. A switch-II region spans residues 67–83; it reads GQEKFGGLRDGYYIQGQ.

It belongs to the small GTPase superfamily. Ran family. As to quaternary structure, found in a nuclear export complex with RanGTP, exportin and pre-miRNA.

It localises to the nucleus. It is found in the chromosome. The protein resides in the centromere. The protein localises to the kinetochore. In terms of biological role, ran GTPase system comprises ran-1, ran-2 and ran-3 and is essential in nucleocytoplasmic transport. Ran-1 is a GTP-binding protein that mediates the interaction between mitotic chromosomes and kinetochore microtubules. Plays a crucial role in nuclear envelope assembly at the end of each cell division. Required for the import of protein into the nucleus and also for RNA export. RCC1 (ran-3)/Ran (ran-1) complex (together with other proteins) acts as a component of a signal transmission pathway that detects unreplicated DNA. The polypeptide is GTP-binding nuclear protein ran-1 (ran-1) (Caenorhabditis elegans).